The primary structure comprises 65 residues: Large ribosomal subunit protein bL35 (65 aa).

Over residues 1–15 (MPKMKTKKSAAKRFQ) the composition is skewed to basic residues. Residues 1 to 26 (MPKMKTKKSAAKRFQVRGSGSIKRGQ) form a disordered region.

This sequence belongs to the bacterial ribosomal protein bL35 family.

This Bordetella avium (strain 197N) protein is Large ribosomal subunit protein bL35.